The chain runs to 503 residues: Lysine--tRNA ligase (503 aa).

Positions 414 and 421 each coordinate Mg(2+).

This sequence belongs to the class-II aminoacyl-tRNA synthetase family. As to quaternary structure, homodimer. Mg(2+) serves as cofactor.

It localises to the cytoplasm. It carries out the reaction tRNA(Lys) + L-lysine + ATP = L-lysyl-tRNA(Lys) + AMP + diphosphate. The protein is Lysine--tRNA ligase of Neisseria meningitidis serogroup B (strain ATCC BAA-335 / MC58).